The sequence spans 594 residues: RING finger protein 207 (594 aa).

An RING-type zinc finger spans residues 25 to 64; sequence CPLCHAQYERPCLLDCFHDFCAGCLRGRTADGRVACPLCQ. The segment at 93–145 adopts a B box-type; atypical zinc-finger fold; the sequence is VEAVHCANCDLDCSKQDAETACFCNTCGQPLCARCRDETHRARMFARHDIVAL. Cys98, Cys101, Cys127, and His132 together coordinate Zn(2+). The disordered stretch occupies residues 369–400; it reads NTLAGGSGPKVLMGPSCPSPVRKVSRSPVQKP. Residues 424–458 adopt a coiled-coil conformation; the sequence is CRHYEDSYRGLQAEVQNLKDQVQELHRDLTKHHSL. A disordered region spans residues 552–594; that stretch reads FQASADDESENPQTAYDASRNGETPASLLLPGSVASAEPPFVN. A compositionally biased stretch (polar residues) spans 562-575; that stretch reads NPQTAYDASRNGET.

Interacts with the core-glycosylated, but not the fully glycosylated form of KCNH2/HERG. Interacts with DNAJA1 and HSPA8. Interacts (via the C-terminus) with HSPA1A; this interaction additively increases KCNH2 expression.

The protein localises to the cytoplasm. Functionally, plays a role in cardiac repolarization possibly by stabilizing membrane expression of the potassium channel KCNH2/HERG, or by assisting its synthesis, folding or export from the endoplasmic reticulum, in a heat shock protein-dependent manner. This chain is RING finger protein 207 (RNF207), found in Oryctolagus cuniculus (Rabbit).